We begin with the raw amino-acid sequence, 36 residues long: Photosystem I reaction center subunit VIII (36 aa).

Residues 8–28 form a helical membrane-spanning segment; it reads SVLVPLVGLVFPAIAMASLFL.

This sequence belongs to the PsaI family.

Its subcellular location is the plastid. The protein resides in the chloroplast thylakoid membrane. May help in the organization of the PsaL subunit. This Helianthus annuus (Common sunflower) protein is Photosystem I reaction center subunit VIII.